The sequence spans 59 residues: Small ribosomal subunit protein bS21 (59 aa).

Residues 35-59 are disordered; sequence REHYEKPSVKKKKKSEAAKRKKRNF. The segment covering 43–59 has biased composition (basic residues); that stretch reads VKKKKKSEAAKRKKRNF.

It belongs to the bacterial ribosomal protein bS21 family.

The protein is Small ribosomal subunit protein bS21 of Finegoldia magna (strain ATCC 29328 / DSM 20472 / WAL 2508) (Peptostreptococcus magnus).